Reading from the N-terminus, the 943-residue chain is Lysine-specific demethylase JMJ21 (943 aa).

One can recognise an F-box domain in the interval 14 to 60; that stretch reads LGSLSVLPDETICVLLEYLAPRDIAHLACVSSVMYILCNEEPLWMSL. The JmjC domain occupies 216–379; that stretch reads EAAPELLKDY…FVCLDMAPGY (164 aa). Positions 262, 264, and 347 each coordinate Fe cation. The segment covering 396–410 has biased composition (acidic residues); the sequence is NSEDLEEETHDEEDN. The tract at residues 396-438 is disordered; the sequence is NSEDLEEETHDEEDNTLSYSDLTRKEKRTRMNGGGETENREED.

It belongs to the JARID1 histone demethylase family. Fe(2+) serves as cofactor. As to expression, mostly expressed in leaves, and, to a lower extent, in inflorescences, roots, siliques and stems.

Its subcellular location is the nucleus. Its function is as follows. May function as histone H3 lysine demethylase and be involved in regulation of gene expression. In Arabidopsis thaliana (Mouse-ear cress), this protein is Lysine-specific demethylase JMJ21.